A 468-amino-acid polypeptide reads, in one-letter code: 3-isopropylmalate dehydratase large subunit (468 aa).

Residues Cys348, Cys409, and Cys412 each contribute to the [4Fe-4S] cluster site.

The protein belongs to the aconitase/IPM isomerase family. LeuC type 1 subfamily. Heterodimer of LeuC and LeuD. It depends on [4Fe-4S] cluster as a cofactor.

The catalysed reaction is (2R,3S)-3-isopropylmalate = (2S)-2-isopropylmalate. Its pathway is amino-acid biosynthesis; L-leucine biosynthesis; L-leucine from 3-methyl-2-oxobutanoate: step 2/4. Catalyzes the isomerization between 2-isopropylmalate and 3-isopropylmalate, via the formation of 2-isopropylmaleate. The polypeptide is 3-isopropylmalate dehydratase large subunit (Dechloromonas aromatica (strain RCB)).